The sequence spans 180 residues: Probable chorismate pyruvate-lyase (180 aa).

Residues R73, L111, and E170 each contribute to the substrate site.

Belongs to the UbiC family.

It localises to the cytoplasm. The catalysed reaction is chorismate = 4-hydroxybenzoate + pyruvate. It functions in the pathway cofactor biosynthesis; ubiquinone biosynthesis. In terms of biological role, removes the pyruvyl group from chorismate, with concomitant aromatization of the ring, to provide 4-hydroxybenzoate (4HB) for the ubiquinone pathway. This is Probable chorismate pyruvate-lyase from Nitrosospira multiformis (strain ATCC 25196 / NCIMB 11849 / C 71).